The primary structure comprises 628 residues: Biosynthetic arginine decarboxylase (628 aa).

Residue lysine 99 is modified to N6-(pyridoxal phosphate)lysine. Valine 279 to tyrosine 289 contributes to the substrate binding site.

This sequence belongs to the Orn/Lys/Arg decarboxylase class-II family. SpeA subfamily. Requires Mg(2+) as cofactor. Pyridoxal 5'-phosphate serves as cofactor.

It catalyses the reaction L-arginine + H(+) = agmatine + CO2. It participates in amine and polyamine biosynthesis; agmatine biosynthesis; agmatine from L-arginine: step 1/1. Its function is as follows. Catalyzes the biosynthesis of agmatine from arginine. The polypeptide is Biosynthetic arginine decarboxylase (Xylella fastidiosa (strain M23)).